Here is a 182-residue protein sequence, read N- to C-terminus: Protein transport protein gos1 (182 aa).

The Cytoplasmic segment spans residues M1 to D163. Residues S164–F181 traverse the membrane as a helical; Anchor for type IV membrane protein segment. H182 is a topological domain (vesicular).

It belongs to the GOSR1 family. As to quaternary structure, component of a SNARE complex consisting of sed5, gos1, ykt6, and sft1.

The protein resides in the golgi apparatus membrane. Nonessential SNARE involved in retrograde transport within the Golgi complex. The protein is Protein transport protein gos1 (gos1) of Schizosaccharomyces pombe (strain 972 / ATCC 24843) (Fission yeast).